We begin with the raw amino-acid sequence, 300 residues long: U1 small nuclear ribonucleoprotein 70 kDa homolog (300 aa).

In terms of domain architecture, RRM spans 107 to 198 (RTIFIGRLPY…RTVKYFKPRR (92 aa)). Disordered stretches follow at residues 204-248 (GGRG…AYSA) and 263-300 (NRPL…APDY). Residues 265-279 (PLLSAATPTAAVTSV) show a composition bias toward low complexity.

As to quaternary structure, component of the spliceosome, where it is associated with snRNP U1. Binds stem loop I of U1 snRNA. Interacts with mRNA.

Its subcellular location is the nucleus. Functionally, involved in nuclear mRNA splicing. This is U1 small nuclear ribonucleoprotein 70 kDa homolog (SNP1) from Saccharomyces cerevisiae (strain ATCC 204508 / S288c) (Baker's yeast).